The sequence spans 465 residues: Soluble pyridine nucleotide transhydrogenase (465 aa).

35–44 (ERYNNVGGGC) lines the FAD pocket.

Belongs to the class-I pyridine nucleotide-disulfide oxidoreductase family. It depends on FAD as a cofactor.

It localises to the cytoplasm. It carries out the reaction NAD(+) + NADPH = NADH + NADP(+). Conversion of NADPH, generated by peripheral catabolic pathways, to NADH, which can enter the respiratory chain for energy generation. This is Soluble pyridine nucleotide transhydrogenase from Photorhabdus laumondii subsp. laumondii (strain DSM 15139 / CIP 105565 / TT01) (Photorhabdus luminescens subsp. laumondii).